Here is a 466-residue protein sequence, read N- to C-terminus: Glutamate decarboxylase beta (466 aa).

Residues T62 and N83 each coordinate substrate. Residues S126 to S127, T212, and H275 contribute to the pyridoxal 5'-phosphate site. N6-(pyridoxal phosphate)lysine is present on K276. K446, K453, and K464 each carry N6-acetyllysine.

It belongs to the group II decarboxylase family. Homohexamer composed of three dimers. It depends on pyridoxal 5'-phosphate as a cofactor.

It carries out the reaction L-glutamate + H(+) = 4-aminobutanoate + CO2. In terms of biological role, converts glutamate to gamma-aminobutyrate (GABA), consuming one intracellular proton in the reaction. The gad system helps to maintain a near-neutral intracellular pH when cells are exposed to extremely acidic conditions. The ability to survive transit through the acidic conditions of the stomach is essential for successful colonization of the mammalian host by commensal and pathogenic bacteria. The chain is Glutamate decarboxylase beta (gadB) from Escherichia coli O6:H1 (strain CFT073 / ATCC 700928 / UPEC).